The primary structure comprises 201 residues: ATP-dependent Clp protease proteolytic subunit (201 aa).

Residue S101 is the Nucleophile of the active site. H126 is a catalytic residue.

This sequence belongs to the peptidase S14 family. Fourteen ClpP subunits assemble into 2 heptameric rings which stack back to back to give a disk-like structure with a central cavity, resembling the structure of eukaryotic proteasomes.

It localises to the cytoplasm. The enzyme catalyses Hydrolysis of proteins to small peptides in the presence of ATP and magnesium. alpha-casein is the usual test substrate. In the absence of ATP, only oligopeptides shorter than five residues are hydrolyzed (such as succinyl-Leu-Tyr-|-NHMec, and Leu-Tyr-Leu-|-Tyr-Trp, in which cleavage of the -Tyr-|-Leu- and -Tyr-|-Trp bonds also occurs).. In terms of biological role, cleaves peptides in various proteins in a process that requires ATP hydrolysis. Has a chymotrypsin-like activity. Plays a major role in the degradation of misfolded proteins. This is ATP-dependent Clp protease proteolytic subunit from Francisella philomiragia subsp. philomiragia (strain ATCC 25017 / CCUG 19701 / FSC 153 / O#319-036).